The chain runs to 312 residues: Probable splicing factor, arginine/serine-rich 1 (312 aa).

The 71-residue stretch at 3–73 (ARIYIGRLTS…ERVILDYSKP (71 aa)) folds into the RRM 1 domain. Disordered regions lie at residues 69–125 (DYSK…GRPY) and 196–312 (KMID…DGDN). Gly residues predominate over residues 74–90 (RGGGGDRGGFGGGGRGG). A compositionally biased stretch (basic and acidic residues) spans 103-121 (GRDRFDRYDRGPPRRESRY). The RRM 2 domain maps to 129-202 (HRVVVENLSS…RKIKMIDDSQ (74 aa)). A compositionally biased stretch (basic residues) spans 206-259 (SRSRSNSRSRSRSRSRDRRRSRSRSSSRSKSRSRSPPKRSRRESKSKSRSRSRS).

The protein belongs to the splicing factor SR family. Extensively phosphorylated on serine residues in the RS domain.

Its subcellular location is the nucleus. Its function is as follows. Plays a functionally redundant role in spermatogenesis and growth rate control. This is Probable splicing factor, arginine/serine-rich 1 (rsp-1) from Caenorhabditis elegans.